We begin with the raw amino-acid sequence, 415 residues long: Coenzyme F420 hydrogenase subunit alpha (415 aa).

Ni(2+) is bound by residues C68, C71, C391, and C394.

Belongs to the [NiFe]/[NiFeSe] hydrogenase large subunit family. In terms of assembly, heterocomplex of the form (alpha(1)beta(1)gamma(1))(8). It depends on Ni(2+) as a cofactor. Requires iron-sulfur cluster as cofactor. The cofactor is FAD.

It carries out the reaction oxidized coenzyme F420-(gamma-L-Glu)(n) + H2 + H(+) = reduced coenzyme F420-(gamma-L-Glu)(n). Reduces the physiological low-potential two-electron acceptor coenzyme F420, and the artificial one-electron acceptor methylviologen. This is Coenzyme F420 hydrogenase subunit alpha (frhA) from Methanocaldococcus jannaschii (strain ATCC 43067 / DSM 2661 / JAL-1 / JCM 10045 / NBRC 100440) (Methanococcus jannaschii).